Consider the following 1051-residue polypeptide: Putative helicase/primase complex protein (1051 aa).

The protein belongs to the asfivirus F1055L family.

Its function is as follows. May be involved in DNA replication. The protein is Putative helicase/primase complex protein of Ornithodoros (relapsing fever ticks).